A 471-amino-acid chain; its full sequence is Trigger factor (471 aa).

The 80-residue stretch at 166 to 245 folds into the PPIase FKBP-type domain; it reads DDFITIDINA…LTAVKVRELP (80 aa). The tract at residues 442–471 is disordered; the sequence is AAGVTGEDDDTEAEEERVTVSADDPGAARF. Residues 447-456 are compositionally biased toward acidic residues; that stretch reads GEDDDTEAEE.

Belongs to the FKBP-type PPIase family. Tig subfamily.

It is found in the cytoplasm. It carries out the reaction [protein]-peptidylproline (omega=180) = [protein]-peptidylproline (omega=0). Functionally, involved in protein export. Acts as a chaperone by maintaining the newly synthesized protein in an open conformation. Functions as a peptidyl-prolyl cis-trans isomerase. The chain is Trigger factor from Renibacterium salmoninarum (strain ATCC 33209 / DSM 20767 / JCM 11484 / NBRC 15589 / NCIMB 2235).